A 338-amino-acid chain; its full sequence is Methionyl-tRNA formyltransferase (338 aa).

110–113 (SLLP) is a binding site for (6S)-5,6,7,8-tetrahydrofolate.

The protein belongs to the Fmt family.

It carries out the reaction L-methionyl-tRNA(fMet) + (6R)-10-formyltetrahydrofolate = N-formyl-L-methionyl-tRNA(fMet) + (6S)-5,6,7,8-tetrahydrofolate + H(+). Attaches a formyl group to the free amino group of methionyl-tRNA(fMet). The formyl group appears to play a dual role in the initiator identity of N-formylmethionyl-tRNA by promoting its recognition by IF2 and preventing the misappropriation of this tRNA by the elongation apparatus. This chain is Methionyl-tRNA formyltransferase, found in Synechococcus sp. (strain CC9605).